Reading from the N-terminus, the 311-residue chain is Ribosomal protein L11 methyltransferase (311 aa).

The S-adenosyl-L-methionine site is built by Thr-160, Gly-181, Asp-203, and Asn-246.

It belongs to the methyltransferase superfamily. PrmA family.

Its subcellular location is the cytoplasm. It carries out the reaction L-lysyl-[protein] + 3 S-adenosyl-L-methionine = N(6),N(6),N(6)-trimethyl-L-lysyl-[protein] + 3 S-adenosyl-L-homocysteine + 3 H(+). In terms of biological role, methylates ribosomal protein L11. The sequence is that of Ribosomal protein L11 methyltransferase from Macrococcus caseolyticus (strain JCSC5402) (Macrococcoides caseolyticum).